The chain runs to 109 residues: Class I hydrophobin G (109 aa).

The N-terminal stretch at 1–19 (MRLSILSVFSLVGAGMVSA) is a signal peptide. 4 cysteine pairs are disulfide-bonded: cysteine 36/cysteine 90, cysteine 42/cysteine 84, cysteine 43/cysteine 76, and cysteine 91/cysteine 105.

Belongs to the fungal hydrophobin family.

The protein resides in the secreted. It is found in the cell wall. Its function is as follows. Aerial growth, conidiation, and dispersal of filamentous fungi in the environment rely upon a capability of their secreting small amphipathic proteins called hydrophobins (HPBs) with low sequence identity. Class I can self-assemble into an outermost layer of rodlet bundles on aerial cell surfaces, conferring cellular hydrophobicity that supports fungal growth, development and dispersal; whereas Class II form highly ordered films at water-air interfaces through intermolecular interactions but contribute nothing to the rodlet structure. In P.expansum, hydrophobins contribute to germination, tolerance to cold stress and mycotoxins patulin and citrinin production. The sequence is that of Class I hydrophobin G from Penicillium expansum (Blue mold rot fungus).